Here is a 127-residue protein sequence, read N- to C-terminus: uncharacterized protein (127 aa).

Its subcellular location is the mitochondrion. This is an uncharacterized protein from Arabidopsis thaliana (Mouse-ear cress).